Reading from the N-terminus, the 249-residue chain is MRILIANDDGALAPGIAALHDALADMAECVVVAPIKDMSGVSGSLTLDRPLHPQLLSNGFIALDGTPTDCVHLGLNGLLDPVPDMVVSGINLGANLGDDVLYSGTVAAAIEGRFCKRPAFAFSLLSREPDNLPAAAHIARTLVEHHERLALPPRTVLSVNIPNLPLERIRGIRLCRLGHRARAKAPVKMVNPRGKEGYWISVAGDAEDGGPGTDFHAVMQGYVSITPLQLDRTFHEAFAGLDSWLEDLL.

A divalent metal cation is bound by residues Asp-8, Asp-9, Ser-39, and Asn-91.

This sequence belongs to the SurE nucleotidase family. A divalent metal cation serves as cofactor.

It is found in the cytoplasm. It carries out the reaction a ribonucleoside 5'-phosphate + H2O = a ribonucleoside + phosphate. Functionally, nucleotidase that shows phosphatase activity on nucleoside 5'-monophosphates. The sequence is that of 5'-nucleotidase SurE from Azotobacter vinelandii (strain DJ / ATCC BAA-1303).